Reading from the N-terminus, the 91-residue chain is Putative membrane protein insertion efficiency factor (91 aa).

It belongs to the UPF0161 family.

Its subcellular location is the cell inner membrane. Its function is as follows. Could be involved in insertion of integral membrane proteins into the membrane. The polypeptide is Putative membrane protein insertion efficiency factor (Saccharophagus degradans (strain 2-40 / ATCC 43961 / DSM 17024)).